We begin with the raw amino-acid sequence, 131 residues long: Class I hydrophobin POH2 (131 aa).

Residues 1–21 (MFFRTSSLFTTIVAFTVMAAA) form the signal peptide. Cystine bridges form between Cys50-Cys110, Cys57-Cys104, Cys58-Cys91, and Cys111-Cys124. N-linked (GlcNAc...) asparagine glycans are attached at residues Asn115 and Asn128.

This sequence belongs to the fungal hydrophobin family. In terms of assembly, self-assembles to form functional amyloid fibrils called rodlets. Self-assembly into fibrillar rodlets occurs spontaneously at hydrophobic:hydrophilic interfaces and the rodlets further associate laterally to form amphipathic monolayers. Expressionn is switched off in the fruiting bodies but abundantly expressed in the vegetative mycelium of both monokaryon and dikaryon.

It is found in the secreted. It localises to the cell wall. Functionally, aerial growth, conidiation, and dispersal of filamentous fungi in the environment rely upon a capability of their secreting small amphipathic proteins called hydrophobins (HPBs) with low sequence identity. Class I can self-assemble into an outermost layer of rodlet bundles on aerial cell surfaces, conferring cellular hydrophobicity that supports fungal growth, development and dispersal; whereas Class II form highly ordered films at water-air interfaces through intermolecular interactions but contribute nothing to the rodlet structure. POH2 is a class I hydrophobin that causes a large drop in the water-surface tension, enabling hyphae to breach the interface and grow into the air, in both the primary and the secondary mycelium. In the latter mycelium POH2 maight also play a role in the emergence of fruiting bodies. Secreted POH2 could also play a role in facilitating lignin degradation. The protein is Class I hydrophobin POH2 of Pleurotus ostreatus (Oyster mushroom).